The sequence spans 228 residues: Ribonuclease 3 (228 aa).

An RNase III domain is found at 5-127 (LMALQARLQH…VIGAVYLDAG (123 aa)). Glu-40 provides a ligand contact to Mg(2+). Asp-44 is a catalytic residue. Residues Asp-113 and Glu-116 each contribute to the Mg(2+) site. Glu-116 is an active-site residue. The 71-residue stretch at 154 to 224 (DPKTELQEWL…AAAMLQTLKA (71 aa)) folds into the DRBM domain.

Belongs to the ribonuclease III family. In terms of assembly, homodimer. Mg(2+) serves as cofactor.

It localises to the cytoplasm. The enzyme catalyses Endonucleolytic cleavage to 5'-phosphomonoester.. Digests double-stranded RNA. Involved in the processing of primary rRNA transcript to yield the immediate precursors to the large and small rRNAs (23S and 16S). Processes some mRNAs, and tRNAs when they are encoded in the rRNA operon. Processes pre-crRNA and tracrRNA of type II CRISPR loci if present in the organism. This is Ribonuclease 3 from Albidiferax ferrireducens (strain ATCC BAA-621 / DSM 15236 / T118) (Rhodoferax ferrireducens).